A 485-amino-acid polypeptide reads, in one-letter code: Glutamate--tRNA ligase (485 aa).

Arg-6 is an L-glutamate binding site. A 'HIGH' region motif is present at residues Pro-9–Thr-19. L-glutamate contacts are provided by residues Tyr-192 and Arg-210 to His-214. The 'KMSKS' region signature appears at Lys-248–Arg-252. ATP is bound at residue Lys-251.

The protein belongs to the class-I aminoacyl-tRNA synthetase family. Glutamate--tRNA ligase type 1 subfamily. In terms of assembly, monomer. Does not require zinc. serves as cofactor.

The protein localises to the cytoplasm. The catalysed reaction is tRNA(Glu) + L-glutamate + ATP = L-glutamyl-tRNA(Glu) + AMP + diphosphate. In terms of biological role, non-discriminating glutamyl-tRNA synthetase. Catalyzes the attachment of glutamate to tRNA(Glu) in a two-step reaction: glutamate is first activated by ATP to form Glu-AMP and then transferred to the acceptor end of tRNA(Glu). Acylates both tRNA(Glu) and tRNA(Gln) with glutamate, but has 13-fold higher efficiency with tRNA(Glu). The protein is Glutamate--tRNA ligase (gltX) of Thermosynechococcus vestitus (strain NIES-2133 / IAM M-273 / BP-1).